The primary structure comprises 468 residues: UDP-N-acetylmuramate--L-alanine ligase (468 aa).

114-120 contributes to the ATP binding site; that stretch reads GTHGKTT.

This sequence belongs to the MurCDEF family.

It is found in the cytoplasm. The catalysed reaction is UDP-N-acetyl-alpha-D-muramate + L-alanine + ATP = UDP-N-acetyl-alpha-D-muramoyl-L-alanine + ADP + phosphate + H(+). The protein operates within cell wall biogenesis; peptidoglycan biosynthesis. In terms of biological role, cell wall formation. The protein is UDP-N-acetylmuramate--L-alanine ligase of Methylorubrum extorquens (strain PA1) (Methylobacterium extorquens).